We begin with the raw amino-acid sequence, 560 residues long: Membrane protein insertase YidC (560 aa).

The next 6 membrane-spanning stretches (helical) occupy residues 5-25, 334-354, 357-377, 431-451, 476-496, and 522-542; these read IINL…WQYF, AIDF…MNFF, YVGN…LLMF, LPIL…YVTI, LFGL…WPIL, and FMPL…LIYW.

It belongs to the OXA1/ALB3/YidC family. Type 1 subfamily. As to quaternary structure, interacts with the Sec translocase complex via SecD. Specifically interacts with transmembrane segments of nascent integral membrane proteins during membrane integration.

Its subcellular location is the cell inner membrane. In terms of biological role, required for the insertion and/or proper folding and/or complex formation of integral membrane proteins into the membrane. Involved in integration of membrane proteins that insert both dependently and independently of the Sec translocase complex, as well as at least some lipoproteins. Aids folding of multispanning membrane proteins. The protein is Membrane protein insertase YidC of Rickettsia akari (strain Hartford).